Here is a 331-residue protein sequence, read N- to C-terminus: uncharacterized protein (331 aa).

4 WD repeats span residues 53 to 92 (KAHT…KSAV), 97 to 139 (QQST…KLIR), 144 to 184 (AHND…DSTD), and 300 to 331 (ASEE…AFRV).

It is found in the cytoplasm. The protein resides in the nucleus. This is an uncharacterized protein from Schizosaccharomyces pombe (strain 972 / ATCC 24843) (Fission yeast).